Here is a 165-residue protein sequence, read N- to C-terminus: Endoribonuclease YbeY (165 aa).

Residues H130, H134, and H140 each coordinate Zn(2+).

This sequence belongs to the endoribonuclease YbeY family. Zn(2+) is required as a cofactor.

It is found in the cytoplasm. Functionally, single strand-specific metallo-endoribonuclease involved in late-stage 70S ribosome quality control and in maturation of the 3' terminus of the 16S rRNA. In Streptococcus suis (strain 98HAH33), this protein is Endoribonuclease YbeY.